The following is a 648-amino-acid chain: MIKITFPNTSARNYAIGTTPMQIAESISCRLAEEILSANVNGEMWDLSRPINENASVKLYKWEDFEGKRTFWHSSAHLLAESLQELYPNIHFGMGPAIENGFYYDVDLGDGVVIKDVDLVTIEKKMQELASKKLSISRQNVTKQNALELFGKKGETYKIELISKLEDGKITVYTQGNFTDLCRGPHLPNTSYIKAIKLTSVARAYWKGDESRKQLTRIYGISFPKKEELSEYLALMEKAKKRDHRRIGKEMELFTFSHKVGRGLPLWLPKGTQLRLRLEDFLKRIQKKYGYQQVITPHIGNKTLYIASGHYAKYGKDSFQPIHTPELGEEFLLKPMNCPHHCEIYKAFLRSYKELPLRLAEFGTVYRYERSGELQGLTRVRGFTQDDAHIFCSPEQVKEELIKVIDIVRVIFCALNFNDYEVQISLRDLNNRIKYIGSEENWKNSEGAIIEVCQEKKIKAKIKLGEAAFYGPKLDFMVKDALGRNWQLGTIQVDYNLPERFELEYVGADNQKHRPVMIHRAPFGSMERFVAVMIEHTGGKFPLWLVSDQVVILPVSENYNQYAEEIAKEFHKRDIRVTIDKRNEKVGRKIRDNELKKIPYLLIIGEKERRNSEISVRKHGKENIGIMKVTEFAEFLKKEVERQMSQWQ.

Positions 1–61 (MIKITFPNTS…NENASVKLYK (61 aa)) constitute a TGS domain. Residues 243–542 (DHRRIGKEME…MIEHTGGKFP (300 aa)) form a catalytic region. Zn(2+)-binding residues include Cys-338, His-389, and His-519.

It belongs to the class-II aminoacyl-tRNA synthetase family. As to quaternary structure, homodimer. Requires Zn(2+) as cofactor.

It is found in the cytoplasm. The enzyme catalyses tRNA(Thr) + L-threonine + ATP = L-threonyl-tRNA(Thr) + AMP + diphosphate + H(+). Its function is as follows. Catalyzes the attachment of threonine to tRNA(Thr) in a two-step reaction: L-threonine is first activated by ATP to form Thr-AMP and then transferred to the acceptor end of tRNA(Thr). Also edits incorrectly charged L-seryl-tRNA(Thr). This Azobacteroides pseudotrichonymphae genomovar. CFP2 protein is Threonine--tRNA ligase.